We begin with the raw amino-acid sequence, 518 residues long: Glutamate--cysteine ligase (518 aa).

This sequence belongs to the glutamate--cysteine ligase type 1 family. Type 1 subfamily.

It catalyses the reaction L-cysteine + L-glutamate + ATP = gamma-L-glutamyl-L-cysteine + ADP + phosphate + H(+). It participates in sulfur metabolism; glutathione biosynthesis; glutathione from L-cysteine and L-glutamate: step 1/2. The sequence is that of Glutamate--cysteine ligase from Shigella sonnei (strain Ss046).